A 196-amino-acid polypeptide reads, in one-letter code: Chromophore lyase CpcT/CpeT (196 aa).

The protein belongs to the CpcT/CpeT biliprotein lyase family.

Covalently attaches a chromophore to Cys residue(s) of phycobiliproteins. In Thermosynechococcus vestitus (strain NIES-2133 / IAM M-273 / BP-1), this protein is Chromophore lyase CpcT/CpeT.